Here is a 264-residue protein sequence, read N- to C-terminus: Thymidylate synthase (264 aa).

Arginine 21 serves as a coordination point for dUMP. Histidine 51 contributes to the (6R)-5,10-methylene-5,6,7,8-tetrahydrofolate binding site. 126-127 (RR) contributes to the dUMP binding site. Cysteine 146 acts as the Nucleophile in catalysis. Residues 166 to 169 (RSAD), asparagine 177, and 207 to 209 (HLY) each bind dUMP. Position 169 (aspartate 169) interacts with (6R)-5,10-methylene-5,6,7,8-tetrahydrofolate. Serine 263 provides a ligand contact to (6R)-5,10-methylene-5,6,7,8-tetrahydrofolate.

The protein belongs to the thymidylate synthase family. Bacterial-type ThyA subfamily. As to quaternary structure, homodimer.

Its subcellular location is the cytoplasm. It catalyses the reaction dUMP + (6R)-5,10-methylene-5,6,7,8-tetrahydrofolate = 7,8-dihydrofolate + dTMP. It functions in the pathway pyrimidine metabolism; dTTP biosynthesis. Catalyzes the reductive methylation of 2'-deoxyuridine-5'-monophosphate (dUMP) to 2'-deoxythymidine-5'-monophosphate (dTMP) while utilizing 5,10-methylenetetrahydrofolate (mTHF) as the methyl donor and reductant in the reaction, yielding dihydrofolate (DHF) as a by-product. This enzymatic reaction provides an intracellular de novo source of dTMP, an essential precursor for DNA biosynthesis. In Neisseria meningitidis serogroup B (strain ATCC BAA-335 / MC58), this protein is Thymidylate synthase.